Here is a 92-residue protein sequence, read N- to C-terminus: Large ribosomal subunit protein eL43 (92 aa).

Zn(2+) is bound by residues C39, C42, C57, and C60.

The protein belongs to the eukaryotic ribosomal protein eL43 family. Component of the large ribosomal subunit. Mature ribosomes consist of a small (40S) and a large (60S) subunit. The 40S subunit contains 32 different proteins and 1 molecule of RNA (18S). The 60S subunit contains 45 different proteins and 3 molecules of RNA (25S, 5.8S and 5S). The cofactor is Zn(2+).

It is found in the cytoplasm. Component of the ribosome, a large ribonucleoprotein complex responsible for the synthesis of proteins in the cell. The small ribosomal subunit (SSU) binds messenger RNAs (mRNAs) and translates the encoded message by selecting cognate aminoacyl-transfer RNA (tRNA) molecules. The large subunit (LSU) contains the ribosomal catalytic site termed the peptidyl transferase center (PTC), which catalyzes the formation of peptide bonds, thereby polymerizing the amino acids delivered by tRNAs into a polypeptide chain. The nascent polypeptides leave the ribosome through a tunnel in the LSU and interact with protein factors that function in enzymatic processing, targeting, and the membrane insertion of nascent chains at the exit of the ribosomal tunnel. The protein is Large ribosomal subunit protein eL43 of Candida albicans (strain SC5314 / ATCC MYA-2876) (Yeast).